The following is a 161-amino-acid chain: Nucleotide-binding protein SAR11_0692 (161 aa).

This sequence belongs to the YajQ family.

In terms of biological role, nucleotide-binding protein. The chain is Nucleotide-binding protein SAR11_0692 from Pelagibacter ubique (strain HTCC1062).